Reading from the N-terminus, the 247-residue chain is Protein SODIUM POTASSIUM ROOT DEFECTIVE 3 (247 aa).

Residues 130–166 (GSTGQDTVATEESEASAPKRGSSGPVEEKKKSSGSGS) are disordered. The HMA domain occupies 167 to 235 (DQVVVLRVSL…KVKNAQFWTP (69 aa)). C180 and C183 together coordinate a metal cation.

The protein localises to the cytoplasm. Its function is as follows. Heavy metal-associated protein involved in salt tolerance. The chain is Protein SODIUM POTASSIUM ROOT DEFECTIVE 3 from Arabidopsis thaliana (Mouse-ear cress).